The following is a 496-amino-acid chain: Glutamyl-tRNA(Gln) amidotransferase subunit A (496 aa).

Residues Lys-75 and Ser-150 each act as charge relay system in the active site. Residue Ser-174 is the Acyl-ester intermediate of the active site.

The protein belongs to the amidase family. GatA subfamily. In terms of assembly, heterotrimer of A, B and C subunits.

The catalysed reaction is L-glutamyl-tRNA(Gln) + L-glutamine + ATP + H2O = L-glutaminyl-tRNA(Gln) + L-glutamate + ADP + phosphate + H(+). In terms of biological role, allows the formation of correctly charged Gln-tRNA(Gln) through the transamidation of misacylated Glu-tRNA(Gln) in organisms which lack glutaminyl-tRNA synthetase. The reaction takes place in the presence of glutamine and ATP through an activated gamma-phospho-Glu-tRNA(Gln). The protein is Glutamyl-tRNA(Gln) amidotransferase subunit A of Burkholderia thailandensis (strain ATCC 700388 / DSM 13276 / CCUG 48851 / CIP 106301 / E264).